A 619-amino-acid polypeptide reads, in one-letter code: Chaperone protein HscA homolog (619 aa).

It belongs to the heat shock protein 70 family.

Functionally, chaperone involved in the maturation of iron-sulfur cluster-containing proteins. Has a low intrinsic ATPase activity which is markedly stimulated by HscB. The chain is Chaperone protein HscA homolog from Chromobacterium violaceum (strain ATCC 12472 / DSM 30191 / JCM 1249 / CCUG 213 / NBRC 12614 / NCIMB 9131 / NCTC 9757 / MK).